Consider the following 122-residue polypeptide: Ribonuclease pancreatic (122 aa).

2 residues coordinate substrate: K6 and R9. Catalysis depends on H11, which acts as the Proton acceptor. 4 cysteine pairs are disulfide-bonded: C25–C83, C39–C94, C57–C109, and C64–C71. Substrate is bound by residues 40–44, K65, and R84; that span reads KPVNT. Residue H117 is the Proton donor of the active site.

It belongs to the pancreatic ribonuclease family. As to quaternary structure, monomer. Interacts with and forms tight 1:1 complexes with RNH1. Dimerization of two such complexes may occur. Interaction with RNH1 inhibits this protein. Pancreas.

It localises to the secreted. The enzyme catalyses an [RNA] containing cytidine + H2O = an [RNA]-3'-cytidine-3'-phosphate + a 5'-hydroxy-ribonucleotide-3'-[RNA].. It catalyses the reaction an [RNA] containing uridine + H2O = an [RNA]-3'-uridine-3'-phosphate + a 5'-hydroxy-ribonucleotide-3'-[RNA].. In terms of biological role, endonuclease that catalyzes the cleavage of RNA on the 3' side of pyrimidine nucleotides. Acts on single-stranded and double-stranded RNA. The polypeptide is Ribonuclease pancreatic (Notamacropus rufogriseus (Red-necked wallaby)).